The sequence spans 174 residues: Ly6/PLAUR domain-containing protein 6 (174 aa).

A signal peptide spans 1–22 (MEPWPLMAWGLMLTAITGWIKA). The region spanning 47 to 141 (FKCFTCEDAP…PRNETDAIFS (95 aa)) is the UPAR/Ly6 domain. 6 disulfide bridges follow: cysteine 49/cysteine 77, cysteine 52/cysteine 61, cysteine 70/cysteine 96, cysteine 102/cysteine 121, cysteine 107/cysteine 118, and cysteine 122/cysteine 127. N-linked (GlcNAc...) asparagine glycans are attached at residues asparagine 134 and asparagine 147. Serine 149 carries GPI-anchor amidated serine lipidation. Residues 150 to 174 (AQSTQTLPLLLLSVSITSLMLHSIN) constitute a propeptide, removed in mature form.

As to quaternary structure, interacts with fzd8 and lrp6.

The protein resides in the cell membrane. Its subcellular location is the membrane raft. Its function is as follows. Acts as an important regulator of embryogenesis through its enhancement of Wnt/beta-catenin signaling. Positively regulates Wnt/beta-catenin signaling by ensuring phosphorylation of lrp6 specifically in plasma membrane rafts and its subsequent internalization into signaling-competent vesicles. Essential for the wnt8-mediated patterning of the mesoderm and neuroectoderm during gastrulation. The polypeptide is Ly6/PLAUR domain-containing protein 6 (lypd6) (Danio rerio (Zebrafish)).